The primary structure comprises 129 residues: Defensin-like protein 182 (129 aa).

Residues 1–26 (METVTSLVFIVNLLIIFTSVVNQARG) form the signal peptide. 8 disulfide bridges follow: C29/C70, C36/C55, C39/C64, C43/C66, C83/C129, C94/C114, C99/C123, and C103/C125.

The protein belongs to the DEFL family.

It localises to the secreted. Its function is as follows. Confers broad-spectrum resistance to pathogens. This Arabidopsis thaliana (Mouse-ear cress) protein is Defensin-like protein 182 (PDF3.2).